The chain runs to 945 residues: Splicing factor, suppressor of white-apricot homolog (945 aa).

2 disordered regions span residues 1–28 (MYGAGGGRAKAERKGGVKEEAGPGGTGT) and 157–190 (YYDPSEPTEEEEPSKQREKSEAENLEENEEPFIA). Composition is skewed to basic and acidic residues over residues 9–21 (AKAERKGGVKEEA) and 169–178 (PSKQREKSEA). One copy of the SURP motif 1 repeat lies at 211-253 (IIERTANFVCKQGAQFEIMLKAKQARNSQFDFLRFDHYLNPYY). A disordered region spans residues 269–298 (AESKSEEKKKSGPTSDNEEEDDEEDGSYLH). Position 283 is a phosphoserine (Ser283). Residues 284 to 294 (DNEEEDDEEDG) show a composition bias toward acidic residues. Lys315 bears the N6-acetyllysine mark. 2 disordered regions span residues 332-355 (KAQADSSAPAPPTADGTPAQPSQV) and 403-438 (SSSPGVTTTVPPPPGTTPPPPPTTAESSSGVTSTTT). The span at 335-352 (ADSSAPAPPTADGTPAQP) shows a compositional bias: low complexity. Residues 412–425 (VPPPPGTTPPPPPT) are compositionally biased toward pro residues. The span at 426–438 (TAESSSGVTSTTT) shows a compositional bias: low complexity. The SURP motif 2 repeat unit spans residues 458–498 (VIDKLAEYVARNGLKFETSVRAKNDQRFEFLQPWHQYNAYY). Disordered stretches follow at residues 512–566 (GSTQ…TVDG), 589–680 (PLEK…QAER), and 714–921 (GVMP…VQSK). Over residues 514–527 (TQAASTAEEAPTET) the composition is skewed to low complexity. The span at 528–540 (AVEESSEAGEDGA) shows a compositional bias: acidic residues. Residues 589–598 (PLEKNRVKLD) show a composition bias toward basic and acidic residues. Ser601 and Ser621 each carry phosphoserine. The segment covering 615–630 (SSVANPSPAAAPPSAV) has biased composition (low complexity). Residues 632-686 (EEKKPQLTQEELEAKQAKQKLEDRLAAAAREKLAQASKESKEKQLQAERKRKAAL) adopt a coiled-coil conformation. Thr639 bears the Phosphothreonine mark. Composition is skewed to basic and acidic residues over residues 643–679 (LEAKQAKQKLEDRLAAAAREKLAQASKESKEKQLQAE) and 733–752 (KPPERPSSRCRDPPREEERE). 2 stretches are compositionally biased toward basic residues: residues 753–787 (KKKKKHKKRSRTRSRSPKYHSSSKPRSRSHSKAKH) and 795–810 (TVRRSRSRSRSPRRRA). Basic and acidic residues predominate over residues 811–821 (HSPERRREDRS). Phosphoserine occurs at positions 829 and 831. Residues 835 to 861 (SRKRTRSRSPHEKKKKRRSRSRTKAKA) show a composition bias toward basic residues. The span at 871–894 (QAAQRPSAHSAHSASISPVESRGS) shows a compositional bias: low complexity. Residues 895-908 (SQERSRGVSQEKDG) show a composition bias toward basic and acidic residues. A phosphoserine mark is found at Ser899 and Ser903. Residues 909-920 (QISSAIVSSVQS) are compositionally biased toward low complexity.

The protein localises to the nucleus. Its function is as follows. Plays a role as an alternative splicing regulator. Regulate its own expression at the level of RNA processing. Also regulates the splicing of fibronectin and CD45 genes. May act, at least in part, by interaction with other R/S-containing splicing factors. Represses the splicing of MAPT/Tau exon 10. The protein is Splicing factor, suppressor of white-apricot homolog (Sfswap) of Rattus norvegicus (Rat).